The following is a 376-amino-acid chain: N-acetyldiaminopimelate deacetylase (376 aa).

Asp69 is a catalytic residue. Glu128 acts as the Proton acceptor in catalysis.

The protein belongs to the peptidase M20A family. N-acetyldiaminopimelate deacetylase subfamily.

It catalyses the reaction N-acetyl-(2S,6S)-2,6-diaminopimelate + H2O = (2S,6S)-2,6-diaminopimelate + acetate. The protein operates within amino-acid biosynthesis; L-lysine biosynthesis via DAP pathway; LL-2,6-diaminopimelate from (S)-tetrahydrodipicolinate (acetylase route): step 3/3. In terms of biological role, catalyzes the conversion of N-acetyl-diaminopimelate to diaminopimelate and acetate. The polypeptide is N-acetyldiaminopimelate deacetylase (Streptococcus pneumoniae (strain CGSP14)).